The sequence spans 337 residues: Basic membrane protein A1 (337 aa).

The N-terminal stretch at Met-1–Ser-17 is a signal peptide. Cys-18 is lipidated: N-palmitoyl cysteine. The S-diacylglycerol cysteine moiety is linked to residue Cys-18.

Belongs to the BMP lipoprotein family. As to quaternary structure, monomer.

Its subcellular location is the cell inner membrane. Immunogenic protein. May be part of an ABC-type nucleoside uptake system involved in the purine salvage pathway. This Borrelia garinii subsp. bavariensis (strain ATCC BAA-2496 / DSM 23469 / PBi) (Borreliella bavariensis) protein is Basic membrane protein A1 (bmpA1).